The chain runs to 112 residues: MSCQIYPSQMCPGKAYKNCKLNIMNFWEVICIYYFALQGSFLGILVNLPILVTTLPLLPPALFFYLMYLFALPLKDIFNIFFPSLDPILIPILIFFLVGVSRARLSKVFKWR.

Helical transmembrane passes span 26 to 46, 50 to 70, and 80 to 100; these read FWEV…GILV, ILVT…MYLF, and IFFP…LVGV.

The protein resides in the host membrane. This Acidianus convivator (ABV) protein is Putative transmembrane protein ORF112.